A 353-amino-acid chain; its full sequence is Peroxidase 34 (353 aa).

An N-terminal signal peptide occupies residues 1–30 (MHFSSSSTSSTWTILITLGCLMLHASLSAA). A Pyrrolidone carboxylic acid modification is found at Gln-31. Disulfide bonds link Cys-41–Cys-121, Cys-74–Cys-79, Cys-127–Cys-331, and Cys-207–Cys-239. Asn-43 carries an N-linked (GlcNAc...) asparagine glycan. Catalysis depends on His-72, which acts as the Proton acceptor. 5 residues coordinate Ca(2+): Asp-73, Val-76, Gly-78, Asp-80, and Ser-82. Asn-87 is a glycosylation site (N-linked (GlcNAc...) asparagine). Pro-169 provides a ligand contact to substrate. His-200 serves as a coordination point for heme b. Thr-201 lines the Ca(2+) pocket. 3 N-linked (GlcNAc...) asparagine glycosylation sites follow: Asn-216, Asn-228, and Asn-244. Residues Asp-252, Thr-255, and Asp-260 each contribute to the Ca(2+) site. A glycan (N-linked (GlcNAc...) asparagine) is linked at Asn-285.

Belongs to the peroxidase family. Classical plant (class III) peroxidase subfamily. Requires heme b as cofactor. Ca(2+) serves as cofactor. As to expression, preferentially expressed in roots, but also detected in flowers, leaves and stems.

It is found in the secreted. The protein resides in the vacuole. It carries out the reaction 2 a phenolic donor + H2O2 = 2 a phenolic radical donor + 2 H2O. In terms of biological role, removal of H(2)O(2), oxidation of toxic reductants, biosynthesis and degradation of lignin, suberization, auxin catabolism, response to environmental stresses such as wounding, pathogen attack and oxidative stress. These functions might be dependent on each isozyme/isoform in each plant tissue. Its function is as follows. May be implicated in the systemic acquired resistance response via the salicylic acid signal transduction pathway. Exhibits a Ca(2+)-pectate binding affinity which could be interpreted in vivo as a specificity to interact with the pectic structure of the cell wall. This Arabidopsis thaliana (Mouse-ear cress) protein is Peroxidase 34 (PER34).